The primary structure comprises 92 residues: MARSIWKGPFVDGYLIKKVQKLMESGKSEMIKTWSRRSTILPIFVGFTFSVHNGNKFVPVSVNEEMVGKKLGDFAPTRTFYGHGADKKVKRK.

Belongs to the universal ribosomal protein uS19 family.

Its function is as follows. Protein S19 forms a complex with S13 that binds strongly to the 16S ribosomal RNA. This Rickettsia akari (strain Hartford) protein is Small ribosomal subunit protein uS19.